The sequence spans 231 residues: Cytochrome c oxidase assembly factor 7A (231 aa).

5 Sel1-like repeats span residues 34 to 66, 68 to 104, 108 to 145, 146 to 182, and 183 to 218; these read PDGC…DQNE, SESF…NKGG, IDSC…DGNF, AASC…SLGH, and VWGC…DLHK.

Belongs to the hcp beta-lactamase family.

The protein resides in the mitochondrion intermembrane space. Its function is as follows. May be required for assembly of mitochondrial respiratory chain complexes. In Xenopus laevis (African clawed frog), this protein is Cytochrome c oxidase assembly factor 7A (coa7-a).